Consider the following 214-residue polypeptide: Dynein axonemal assembly factor 6 (214 aa).

Disordered stretches follow at residues methionine 1–aspartate 22 and alanine 34–proline 68.

This sequence belongs to the PIH1 family. Interacts with HSPA1A/B and HSP90AA1. Interacts with DNAAF2 and DNAAF4. Interacts wuth DNAI2. In terms of tissue distribution, expressed in testis, small intestine, prostate, adrenal gland, spleen, lung, bladder, breast and ovary. Expressed in ciliated epithelial cells.

It is found in the cytoplasm. Its subcellular location is the golgi apparatus. The protein localises to the trans-Golgi network. Its function is as follows. Plays a role in cytoplasmic pre-assembly of axonemal dynein. This Homo sapiens (Human) protein is Dynein axonemal assembly factor 6.